We begin with the raw amino-acid sequence, 156 residues long: MIQSQISQNARLALSEVILLAKARKDLSFAQITEGTGLSEAFVTAALLGQHPLPASAAQVVGDKLGLDADGIALLQTIPLRGSIQGGVPTDPTIYRFYEMLQVYGTTLKALVHEKFGDGIISAINFKLDVKKVDDPEGGSRAVITLDGKYLPTKPF.

Active-site residues include R96, E99, and S122.

It belongs to the cyanase family.

It catalyses the reaction cyanate + hydrogencarbonate + 3 H(+) = NH4(+) + 2 CO2. Functionally, catalyzes the reaction of cyanate with bicarbonate to produce ammonia and carbon dioxide. The chain is Cyanate hydratase from Pseudomonas entomophila (strain L48).